We begin with the raw amino-acid sequence, 224 residues long: BOS complex subunit TMEM147 (224 aa).

The helical transmembrane segment at 1–21 (MTLFHFGNCFALAYFPYFITY) threads the bilayer. At 22-34 (KCSGLSEYNAFWK) the chain is on the cytoplasmic side. The helical transmembrane segment at 35 to 58 (CVQAGVTYLFVQLCKMLFLATFFP) threads the bilayer. Residues 59 to 66 (TWEGGIYD) lie on the Lumenal side of the membrane. The chain crosses the membrane as a helical span at residues 67 to 88 (FIGEFMKASVDVADLIGLNLVM). The Cytoplasmic segment spans residues 89-98 (SRNAGKGEYK). Residues 99-124 (IMVAALGWATAELIMSRCIPLWVGAR) form a helical membrane-spanning segment. Over 125–129 (GIEFD) the chain is Lumenal. Residues 130–155 (WKYIQMSIDSNISLVHYIVASAQVWM) form a helical membrane-spanning segment. The Cytoplasmic portion of the chain corresponds to 156–164 (ITRYDLYHT). Residues 165–187 (FRPAVLLLMFLSVYKAFVMETFV) form a helical membrane-spanning segment. Topologically, residues 188–194 (HLCSLGS) are lumenal. The chain crosses the membrane as a helical span at residues 195–216 (WAALLARAVVTGLLALSTLALY). Residues 217 to 224 (VAVVNVHS) are Cytoplasmic-facing.

The protein belongs to the TMEM147 family. As to quaternary structure, component of the back of Sec61 (BOS) complex, composed of NCLN/Nicalin, NOMO (NOMO1, NOMO2 or NOMO3) and TMEM147. The BOS complex is part of the multi-pass translocon (MPT) complex, composed of three subcomplexes, the GEL complex (composed of RAB5IF/OPTI and TMCO1), the BOS complex (composed of NCLN/Nicalin, NOMO and TMEM147) and the PAT complex (composed of WDR83OS/Asterix and CCDC47). The MPT complex associates with the SEC61 complex. Interacts with CHRM3, CHRM1 and AVPR2. Interacts with LBR; promoting LBR localization to the nucleus inner membrane. Interacts with DHCR7.

The protein resides in the endoplasmic reticulum membrane. It localises to the nucleus membrane. The protein localises to the cell membrane. Component of the multi-pass translocon (MPT) complex that mediates insertion of multi-pass membrane proteins into the lipid bilayer of membranes. The MPT complex takes over after the SEC61 complex: following membrane insertion of the first few transmembrane segments of proteins by the SEC61 complex, the MPT complex occludes the lateral gate of the SEC61 complex to promote insertion of subsequent transmembrane regions. Also acts as a negative regulator of CHRM3 function, most likely by interfering with its trafficking to the cell membrane. Negatively regulates CHRM3-mediated calcium mobilization and activation of RPS6KA1/p90RSK activity. Regulates LBR localization to the nucleus inner membrane. The polypeptide is BOS complex subunit TMEM147 (Homo sapiens (Human)).